Reading from the N-terminus, the 1791-residue chain is Protein TIC 214 (1791 aa).

6 consecutive transmembrane segments (helical) span residues 19 to 39 (IINS…FSIG), 68 to 88 (FIAG…HLAL), 91 to 111 (PHTI…WNNH), 133 to 153 (VFLN…SSML), 176 to 196 (VGWL…LVWI), and 230 to 250 (IFSI…PSPI). The segment covering 257-271 (GTSETEERGGTKQDQ) has biased composition (basic and acidic residues). 2 disordered regions span residues 257-278 (GTSE…TEEA) and 1498-1521 (ADQG…PNQE).

It belongs to the TIC214 family. Part of the Tic complex.

It localises to the plastid. It is found in the chloroplast inner membrane. Its function is as follows. Involved in protein precursor import into chloroplasts. May be part of an intermediate translocation complex acting as a protein-conducting channel at the inner envelope. The polypeptide is Protein TIC 214 (Aethionema grandiflorum (Persian stone-cress)).